Consider the following 60-residue polypeptide: Large ribosomal subunit protein bL32 (60 aa).

The tract at residues 1–23 (MAVPRNRHSNARKNIRRSHHAKQ) is disordered.

This sequence belongs to the bacterial ribosomal protein bL32 family.

The polypeptide is Large ribosomal subunit protein bL32 (Chlamydia abortus (strain DSM 27085 / S26/3) (Chlamydophila abortus)).